Reading from the N-terminus, the 63-residue chain is Large ribosomal subunit protein bL32c (63 aa).

Residues 39 to 63 (SFSSGNEHPKPKGFSGQQTNNKIFE) form a disordered region. Residues 53 to 63 (SGQQTNNKIFE) show a composition bias toward polar residues.

This sequence belongs to the bacterial ribosomal protein bL32 family.

It localises to the plastid. The protein resides in the chloroplast. The protein is Large ribosomal subunit protein bL32c of Triticum aestivum (Wheat).